The primary structure comprises 227 residues: PKHD-type hydroxylase Dtpsy_0528 (227 aa).

In terms of domain architecture, Fe2OG dioxygenase spans 78-178 (TIYPPKFNRY…RVASFFWIES (101 aa)). Fe cation contacts are provided by His-96, Asp-98, and His-159. Arg-169 lines the 2-oxoglutarate pocket.

Fe(2+) serves as cofactor. The cofactor is L-ascorbate.

This chain is PKHD-type hydroxylase Dtpsy_0528, found in Acidovorax ebreus (strain TPSY) (Diaphorobacter sp. (strain TPSY)).